The primary structure comprises 161 residues: 6,7-dimethyl-8-ribityllumazine synthase (161 aa).

5-amino-6-(D-ribitylamino)uracil contacts are provided by residues tryptophan 26, 58–60 (SFE), and 81–83 (VVI). 86 to 87 (GT) provides a ligand contact to (2S)-2-hydroxy-3-oxobutyl phosphate. Catalysis depends on histidine 89, which acts as the Proton donor. Phenylalanine 114 provides a ligand contact to 5-amino-6-(D-ribitylamino)uracil. Arginine 128 provides a ligand contact to (2S)-2-hydroxy-3-oxobutyl phosphate.

The protein belongs to the DMRL synthase family.

The enzyme catalyses (2S)-2-hydroxy-3-oxobutyl phosphate + 5-amino-6-(D-ribitylamino)uracil = 6,7-dimethyl-8-(1-D-ribityl)lumazine + phosphate + 2 H2O + H(+). It participates in cofactor biosynthesis; riboflavin biosynthesis; riboflavin from 2-hydroxy-3-oxobutyl phosphate and 5-amino-6-(D-ribitylamino)uracil: step 1/2. Catalyzes the formation of 6,7-dimethyl-8-ribityllumazine by condensation of 5-amino-6-(D-ribitylamino)uracil with 3,4-dihydroxy-2-butanone 4-phosphate. This is the penultimate step in the biosynthesis of riboflavin. This Streptomyces coelicolor (strain ATCC BAA-471 / A3(2) / M145) protein is 6,7-dimethyl-8-ribityllumazine synthase.